The primary structure comprises 21 residues: Azemiopsin (21 aa).

The segment covering 1–14 (DNWWPKPPHQGPRP) has biased composition (pro residues). The interval 1 to 21 (DNWWPKPPHQGPRPPRPRPKP) is disordered. Implicated in receptor binding stretches follow at residues 3–6 (WWPK), 8–11 (PHQG), and 13–14 (RP).

Monomer. In terms of tissue distribution, expressed by the venom gland.

It localises to the secreted. Its function is as follows. In vitro, reversibly blocks human muscle-type nicotinic acetylcholine receptors (nAChR) alpha-1-beta-1-epsilon-delta/CHRNA1-CHRNB1-CHRNE-CHRND (EC(50)=0.44 uM) and alpha-1-beta-1-gamma-delta/CHRNA1-CHRNB1-CHRNG-CHRND (EC(50)=1.56 uM). Binds to nAChR from T.californica (IC(50)=0.03-0.18 uM), human neuronal nAChR alpha-7/CHRNA7 (IC(50)=22 uM) and acetylcholine-binding proteins (AChBP) from L.stagnalis (IC(50)=63 uM) and A.californica (IC(50)=230 uM). This is Azemiopsin from Azemiops feae (Fea's viper).